The following is a 400-amino-acid chain: Acetate kinase (400 aa).

N10 contributes to the Mg(2+) binding site. Residue K17 coordinates ATP. R91 contributes to the substrate binding site. D150 acts as the Proton donor/acceptor in catalysis. Residues 210–214, 285–287, and 333–337 each bind ATP; these read HLGNG, DCR, and GIGEN. A Mg(2+)-binding site is contributed by E387.

The protein belongs to the acetokinase family. In terms of assembly, homodimer. The cofactor is Mg(2+). Requires Mn(2+) as cofactor.

It localises to the cytoplasm. It carries out the reaction acetate + ATP = acetyl phosphate + ADP. Its pathway is metabolic intermediate biosynthesis; acetyl-CoA biosynthesis; acetyl-CoA from acetate: step 1/2. In terms of biological role, catalyzes the formation of acetyl phosphate from acetate and ATP. Can also catalyze the reverse reaction. In Cronobacter sakazakii (strain ATCC BAA-894) (Enterobacter sakazakii), this protein is Acetate kinase.